The chain runs to 118 residues: V-type proton ATPase subunit G 2 (118 aa).

Residues 25–90 (ARKRKARRLK…VQGMQSSQQR (66 aa)) are disordered. The segment covering 35–56 (QAKEEAQMEVEQYRREREHEFQ) has biased composition (basic and acidic residues). Polar residues-rich tracts occupy residues 57–69 (SKQQ…QGNL) and 78–89 (RRQVQGMQSSQQ).

It belongs to the V-ATPase G subunit family. As to quaternary structure, V-ATPase is a heteromultimeric enzyme made up of two complexes: the ATP-hydrolytic V1 complex and the proton translocation V0 complex. The V1 complex consists of three catalytic AB heterodimers that form a heterohexamer, three peripheral stalks each consisting of EG heterodimers, one central rotor including subunits D and F, and the regulatory subunits C and H. The proton translocation complex V0 consists of the proton transport subunit a, a ring of proteolipid subunits c9c'', rotary subunit d, subunits e and f, and the accessory subunits ATP6AP1/Ac45 and ATP6AP2/PRR. Brain.

It localises to the melanosome. Its subcellular location is the cytoplasmic vesicle. The protein localises to the clathrin-coated vesicle membrane. Subunit of the V1 complex of vacuolar(H+)-ATPase (V-ATPase), a multisubunit enzyme composed of a peripheral complex (V1) that hydrolyzes ATP and a membrane integral complex (V0) that translocates protons. V-ATPase is responsible for acidifying and maintaining the pH of intracellular compartments and in some cell types, is targeted to the plasma membrane, where it is responsible for acidifying the extracellular environment. The sequence is that of V-type proton ATPase subunit G 2 (ATP6V1G2) from Homo sapiens (Human).